The sequence spans 139 residues: DNILYSGETLSPGEFLNNGRYVFIMQEDCNLVLYDLDKPIWATNTGGLDRRCHLSMQSDGNLVVYSPRNNPIWASNTGGENGNYVCVLQKDRNVVIYGTARWATGTNIHGAGIVGVPGSAPQNSTAEMMKLVRKYLITK.

The Bulb-type lectin domain occupies 1–109 (DNILYSGETL…ARWATGTNIH (109 aa)). Residues Gln26, Asp28, Asn30, Tyr34, Asp37, Lys38, Trp41, Ala42, Asn44, Gln57, Asp59, Asn61, Tyr65, Ile72, Trp73, Asn76, Asn83, Gln89, Asp91, Asn93, Tyr97, and Trp102 each coordinate alpha-D-mannopyranose. Cysteines 29 and 52 form a disulfide.

As to quaternary structure, homotetramer; antiparallel. In terms of tissue distribution, detected in bulbs (at protein level).

Its subcellular location is the secreted. Functionally, mannose-specific lectin. Displays antiviral activity and therefore may contribute to defense against infections. Shows agglutinating activity towards rabbit erythrocytes. In Narcissus tazetta (Cream narcissus), this protein is Mannose-specific lectin.